A 394-amino-acid polypeptide reads, in one-letter code: Transcriptional regulator Myc-1 (394 aa).

T58 carries O-linked (GlcNAc) threonine glycosylation. Positions 76 to 84 match the 9aaTAD motif; the sequence is EMVSEFLGD. Disordered regions lie at residues 177 to 247 and 283 to 318; these read SGKS…SRYP and EASSNSNSRHVKQRKCTSPRTSDSEDNDKRRTHNVL. Positions 205 to 226 are enriched in acidic residues; the sequence is DSEEEEEEEEEEEEEEEEEEID. The span at 229–238 shows a compositional bias: basic and acidic residues; it reads TVEKRQKKNE. A bHLH domain is found at 310–362; that stretch reads DKRRTHNVLERQRRNELKLSFFALRDEIPDVANNEKAAKVVILKKATECIHSM. The tract at residues 369 to 390 is leucine-zipper; it reads LLSIKEQLRRKSEQLKHRLQLL.

As to quaternary structure, efficient DNA binding requires dimerization with another bHLH protein. Binds DNA as a heterodimer with MAX.

The protein resides in the nucleus. Its function is as follows. Transcription factor that binds DNA in a non-specific manner, yet also specifically recognizes the core sequence 5'-CAC[GA]TG-3'. Activates the transcription of growth-related genes. In Cyprinus carpio (Common carp), this protein is Transcriptional regulator Myc-1 (myca).